Consider the following 164-residue polypeptide: Seripauperin-21 (164 aa).

It belongs to the SRP1/TIP1 family. Seripauperin subfamily.

This chain is Seripauperin-21 (PAU21), found in Saccharomyces cerevisiae (strain ATCC 204508 / S288c) (Baker's yeast).